Reading from the N-terminus, the 579-residue chain is Arginine--tRNA ligase (579 aa).

The 'HIGH' region signature appears at 127-137; that stretch reads PNLAKEMHVGH.

Belongs to the class-I aminoacyl-tRNA synthetase family. In terms of assembly, monomer.

It localises to the cytoplasm. The enzyme catalyses tRNA(Arg) + L-arginine + ATP = L-arginyl-tRNA(Arg) + AMP + diphosphate. In Ectopseudomonas mendocina (strain ymp) (Pseudomonas mendocina), this protein is Arginine--tRNA ligase.